An 87-amino-acid polypeptide reads, in one-letter code: Small ribosomal subunit protein uS17 (87 aa).

It belongs to the universal ribosomal protein uS17 family. Part of the 30S ribosomal subunit.

Its function is as follows. One of the primary rRNA binding proteins, it binds specifically to the 5'-end of 16S ribosomal RNA. The sequence is that of Small ribosomal subunit protein uS17 from Hydrogenovibrio crunogenus (strain DSM 25203 / XCL-2) (Thiomicrospira crunogena).